A 297-amino-acid polypeptide reads, in one-letter code: Putative peptidyl-prolyl cis-trans isomerase YacD (297 aa).

Residues 1 to 32 form the signal peptide; the sequence is MKSRTIWTIILGALLVCCIAVAYTLTKSQAGA. A PpiC domain is found at 154–247; it reads DDSYRIRHIV…NGYAIIQLKE (94 aa).

The catalysed reaction is [protein]-peptidylproline (omega=180) = [protein]-peptidylproline (omega=0). This Bacillus subtilis (strain 168) protein is Putative peptidyl-prolyl cis-trans isomerase YacD (yacD).